A 315-amino-acid chain; its full sequence is Spermidine synthase 1 (315 aa).

The PABS domain occupies 25-262 (PGWFSEISPL…GMIGFMLCST (238 aa)). Glutamine 56 provides a ligand contact to S-adenosyl 3-(methylsulfanyl)propylamine. Tyrosine 86 provides a ligand contact to putrescine. S-adenosyl 3-(methylsulfanyl)propylamine-binding positions include glutamine 87, aspartate 111, glutamate 131, 162-163 (DG), and aspartate 181. The active-site Proton acceptor is aspartate 181. Putrescine contacts are provided by residues 181–184 (DSSD) and tyrosine 250.

Belongs to the spermidine/spermine synthase family.

It carries out the reaction S-adenosyl 3-(methylsulfanyl)propylamine + putrescine = S-methyl-5'-thioadenosine + spermidine + H(+). Its pathway is amine and polyamine biosynthesis; spermidine biosynthesis; spermidine from putrescine: step 1/1. The polypeptide is Spermidine synthase 1 (Hyoscyamus niger (Black henbane)).